The chain runs to 170 residues: Vimentin A1 (170 aa).

Residues 1–10 (DLTEAANKSN) are compositionally biased toward polar residues. The segment at 1–20 (DLTEAANKSNEALRLAKQES) is disordered. The segment at 1–111 (DLTEAANKSN…ATYRKLLEGE (111 aa)) is coil 2. One can recognise an IF rod domain in the interval 1-115 (DLTEAANKSN…KLLEGEESRI (115 aa)). The tail stretch occupies residues 112–170 (ESRISTPLPNFSSFNLRETMLELKPNIESTFTKKVLIKTIETRDGQVLNESTQNHDDLE).

The protein belongs to the intermediate filament family. As to quaternary structure, homomer. In terms of processing, one of the most prominent phosphoproteins in various cells of mesenchymal origin. Phosphorylation is enhanced during cell division, at which time vimentin filaments are significantly reorganized. Expressed in low amounts in retina, optic nerve, and brain and in higher amounts in spinal cord.

Functionally, vimentins are class-III intermediate filaments found in various non-epithelial cells, especially mesenchymal cells. Vimentin is attached to the nucleus, endoplasmic reticulum, and mitochondria, either laterally or terminally. The chain is Vimentin A1 from Carassius auratus (Goldfish).